The following is a 353-amino-acid chain: Colistin resistance protein EmrA (353 aa).

The helical transmembrane segment at 21-41 (WGVFSVLLLFLVAGILYYFFV) threads the bilayer. A coiled-coil region spans residues 132 to 204 (VVAAQADLAR…QASRAQLLAD (73 aa)).

The protein belongs to the membrane fusion protein (MFP) (TC 8.A.1) family.

The protein localises to the cell inner membrane. Functionally, probably part of an efflux pump system that contributes to adaptation to osmotic stress and resistance to colistin. In Acinetobacter baumannii (strain ATCC 17978 / DSM 105126 / CIP 53.77 / LMG 1025 / NCDC KC755 / 5377), this protein is Colistin resistance protein EmrA.